A 1061-amino-acid polypeptide reads, in one-letter code: Bifunctional cytochrome P450/NADPH--P450 reductase 1 (1061 aa).

The cytochrome P450 stretch occupies residues 1–475 (MKETSPIPQP…AEKAAPDEQK (475 aa)). C403 is a heme binding site. The NADPH--P450 reductase stretch occupies residues 476–1061 (EKTEAKGASV…MYAKDVWAGI (586 aa)). Residues 493-632 (LLVLYGSDTG…QLDEWKKSMW (140 aa)) form the Flavodoxin-like domain. Residues 499 to 504 (SDTGTA), 546 to 549 (SYNG), 580 to 582 (CGD), and 588 to 590 (TYQ) contribute to the FMN site. In terms of domain architecture, FAD-binding FR-type spans 671–904 (YEASHASIAE…RTPESRFQLP (234 aa)).

In the N-terminal section; belongs to the cytochrome P450 family. It depends on FAD as a cofactor. FMN serves as cofactor. The cofactor is heme b.

Its subcellular location is the cytoplasm. It carries out the reaction an organic molecule + reduced [NADPH--hemoprotein reductase] + O2 = an alcohol + oxidized [NADPH--hemoprotein reductase] + H2O + H(+). The catalysed reaction is 2 oxidized [cytochrome P450] + NADPH = 2 reduced [cytochrome P450] + NADP(+) + H(+). In terms of biological role, functions as a fatty acid monooxygenase. Catalyzes hydroxylation of a range of long-chain fatty acids, with a preference for long-chain unsaturated and branched-chain fatty acids over saturated fatty acids. Hydroxylation of myristic acid occurs mainly at the omega-2 position. Also displays a NADPH-dependent reductase activity in the C-terminal domain, which allows electron transfer from NADPH to the heme iron of the cytochrome P450 N-terminal domain. Is also able to catalyze efficient oxidation of sodium dodecyl sulfate (SDS). This Bacillus subtilis (strain 168) protein is Bifunctional cytochrome P450/NADPH--P450 reductase 1.